The chain runs to 780 residues: Tyrosine-protein phosphatase non-receptor type 12 (780 aa).

N-acetylmethionine is present on M1. S19 is subject to Phosphoserine. The Tyrosine-protein phosphatase domain occupies 28 to 293 (FARDFMRLRR…ELVHRAIAQL (266 aa)). Substrate contacts are provided by residues R36, 63–67 (RYKDI), D199, 231–237 (CSAGCGR), and Q278. The Phosphocysteine intermediate role is filled by C231. Phosphoserine occurs at positions 332, 435, 449, and 468. Residues 345–438 (VEGDAKEEIL…KLERNLSFEI (94 aa)) are interaction with TGFB1I1. Polar residues predominate over residues 502–519 (QSNKVSVTPPEESQNSDT). Disordered stretches follow at residues 502 to 639 (QSNK…STES), 657 to 725 (GTTH…EKCD), and 744 to 780 (SDKR…SEWT). Phosphothreonine is present on residues T509 and T519. Residues 521–533 (PRPDRLPLDEKGH) are compositionally biased toward basic and acidic residues. Polar residues-rich tracts occupy residues 552-577 (EGNS…TQVE) and 587-601 (TSPL…TNPL). S567 is modified (phosphoserine). Phosphothreonine is present on T569. S571 and S596 each carry phosphoserine. At T598 the chain carries Phosphothreonine. A compositionally biased stretch (basic and acidic residues) spans 602 to 613 (HSDDSDSDERNS). 4 positions are modified to phosphoserine: S603, S606, S608, and S613. Positions 622–639 (TNISTASATVSAATSTES) are enriched in low complexity. A phosphoserine mark is found at S673 and S689. Residues 690 to 703 (EHNTPVRSEWSELQ) are compositionally biased toward polar residues. T693 is subject to Phosphothreonine. 2 stretches are compositionally biased toward basic and acidic residues: residues 704–725 (SQER…EKCD) and 771–780 (GPRDPPSEWT).

This sequence belongs to the protein-tyrosine phosphatase family. Non-receptor class 4 subfamily. In terms of assembly, interacts with TGFB1I1. Interacts with PSTPIP1. Interacts with PTK2B/PYK2. Interacts with LPXN. Interacts with SORBS2; this interaction greatly enhances WASF1 dephosphorylation and might mediate partial translocation to focal adhesion sites. Post-translationally, phosphorylated by STK24/MST3 and this results in inhibition of its activity.

It localises to the cytoplasm. The protein localises to the cell junction. It is found in the focal adhesion. Its subcellular location is the cell projection. The protein resides in the podosome. It catalyses the reaction O-phospho-L-tyrosyl-[protein] + H2O = L-tyrosyl-[protein] + phosphate. Dephosphorylates a range of proteins, and thereby regulates cellular signaling cascades. Dephosphorylates cellular tyrosine kinases, such as ERBB2 and PTK2B/PYK2, and thereby regulates signaling via ERBB2 and PTK2B/PYK2. Selectively dephosphorylates ERBB2 phosphorylated at 'Tyr-1112', 'Tyr-1196', and/or 'Tyr-1248'. This Homo sapiens (Human) protein is Tyrosine-protein phosphatase non-receptor type 12 (PTPN12).